A 377-amino-acid chain; its full sequence is DNA-directed RNA polymerase subunit alpha (377 aa).

Residues 1–259 (MSDSSHNLLY…KHFSVFEKMD (259 aa)) are alpha N-terminal domain (alpha-NTD). Positions 279–377 (ILHKLVLGIN…KIRSSKNTKG (99 aa)) are alpha C-terminal domain (alpha-CTD).

This sequence belongs to the RNA polymerase alpha chain family. In terms of assembly, homodimer. The RNAP catalytic core consists of 2 alpha, 1 beta, 1 beta' and 1 omega subunit. When a sigma factor is associated with the core the holoenzyme is formed, which can initiate transcription.

The catalysed reaction is RNA(n) + a ribonucleoside 5'-triphosphate = RNA(n+1) + diphosphate. DNA-dependent RNA polymerase catalyzes the transcription of DNA into RNA using the four ribonucleoside triphosphates as substrates. This is DNA-directed RNA polymerase subunit alpha from Chlamydia trachomatis serovar L2 (strain ATCC VR-902B / DSM 19102 / 434/Bu).